The following is a 303-amino-acid chain: Glutamyl-Q tRNA(Asp) synthetase (303 aa).

Residues 16 to 20 (RFAPS) and Glu52 contribute to the L-glutamate site. The short motif at 19 to 29 (PSPSGPLHFGS) is the 'HIGH' region element. Residues Cys108, Cys110, Tyr122, and Cys126 each contribute to the Zn(2+) site. 2 residues coordinate L-glutamate: Tyr177 and Arg195. A 'KMSKS' region motif is present at residues 233-237 (KLSKQ). Lys236 contributes to the ATP binding site.

Belongs to the class-I aminoacyl-tRNA synthetase family. GluQ subfamily. It depends on Zn(2+) as a cofactor.

Catalyzes the tRNA-independent activation of glutamate in presence of ATP and the subsequent transfer of glutamate onto a tRNA(Asp). Glutamate is transferred on the 2-amino-5-(4,5-dihydroxy-2-cyclopenten-1-yl) moiety of the queuosine in the wobble position of the QUC anticodon. In Vibrio vulnificus (strain CMCP6), this protein is Glutamyl-Q tRNA(Asp) synthetase.